A 338-amino-acid chain; its full sequence is DNA-directed RNA polymerase subunit alpha (338 aa).

Residues 1 to 225 (MLISQRPTLT…ELFGLARELN (225 aa)) are alpha N-terminal domain (alpha-NTD). The interval 242-338 (YIAAYSMPIE…YIDVEPEDAE (97 aa)) is alpha C-terminal domain (alpha-CTD). The tract at residues 314–338 (FDPSTLEGYDAETGGYIDVEPEDAE) is disordered.

This sequence belongs to the RNA polymerase alpha chain family. In terms of assembly, homodimer. The RNAP catalytic core consists of 2 alpha, 1 beta, 1 beta' and 1 omega subunit. When a sigma factor is associated with the core the holoenzyme is formed, which can initiate transcription.

The catalysed reaction is RNA(n) + a ribonucleoside 5'-triphosphate = RNA(n+1) + diphosphate. In terms of biological role, DNA-dependent RNA polymerase catalyzes the transcription of DNA into RNA using the four ribonucleoside triphosphates as substrates. This Corynebacterium efficiens (strain DSM 44549 / YS-314 / AJ 12310 / JCM 11189 / NBRC 100395) protein is DNA-directed RNA polymerase subunit alpha.